Here is a 358-residue protein sequence, read N- to C-terminus: Ganglioside-induced differentiation-associated protein 1 (358 aa).

The 82-residue stretch at 24-105 (VKLILYHWTH…YLEQTFLDER (82 aa)) folds into the GST N-terminal domain. Residues Lys50, Lys172, Lys173, Lys188, and Lys190 each participate in a glycyl lysine isopeptide (Lys-Gly) (interchain with G-Cter in ubiquitin) cross-link. The GST C-terminal domain maps to 153 to 309 (PAYATTRIRS…LISAVLPTAF (157 aa)). Position 203 is an N6-acetyllysine; alternate (Lys203). Lys203 participates in a covalent cross-link: Glycyl lysine isopeptide (Lys-Gly) (interchain with G-Cter in ubiquitin); alternate. Residues Lys206, Lys207, and Lys214 each participate in a glycyl lysine isopeptide (Lys-Gly) (interchain with G-Cter in ubiquitin) cross-link. Transmembrane regions (helical) follow at residues 292 to 312 (VLGH…FRVA) and 320 to 340 (LGTT…FMLF). The tract at residues 320 to 358 (LGTTLVVGLLAGVGYFAFMLFRKRLGSMILAFRPRPNYF) is required for mitochondrial localization.

It belongs to the GST superfamily. Homodimer. Post-translationally, ubiquitinated by PRKN during mitophagy, leading to its degradation and enhancement of mitophagy. Deubiquitinated by USP30. As to expression, highly expressed in whole brain and spinal cord. Predominant expression in central tissues of the nervous system not only in neurons but also in Schwann cells.

It is found in the mitochondrion outer membrane. The protein localises to the cytoplasm. Regulates the mitochondrial network by promoting mitochondrial fission. This chain is Ganglioside-induced differentiation-associated protein 1 (GDAP1), found in Homo sapiens (Human).